The sequence spans 348 residues: Fructose-1,6-bisphosphatase class 1 2 (348 aa).

Mg(2+)-binding residues include Glu93, Asp117, Leu119, and Asp120. Substrate-binding positions include 120-123 (DGSS), Asn213, Tyr244, and Lys274. Glu280 contributes to the Mg(2+) binding site.

The protein belongs to the FBPase class 1 family. Homotetramer. Mg(2+) is required as a cofactor.

It is found in the cytoplasm. It catalyses the reaction beta-D-fructose 1,6-bisphosphate + H2O = beta-D-fructose 6-phosphate + phosphate. The protein operates within carbohydrate biosynthesis; gluconeogenesis. This is Fructose-1,6-bisphosphatase class 1 2 from Christiangramia forsetii (strain DSM 17595 / CGMCC 1.15422 / KT0803) (Gramella forsetii).